The primary structure comprises 934 residues: ATP-dependent RNA helicase dbp-10 (934 aa).

The disordered stretch occupies residues 21-43; the sequence is LFNNDSDFEDNSSKHHTKKGAVT. Residues 99 to 127 carry the Q motif motif; the sequence is GGFQAMGLNAHLLRAITRKGFSVPTPIQR. A Helicase ATP-binding domain is found at 130-302; sequence IPLILERKDV…RAGLQEPSLV (173 aa). ATP is bound at residue 143-150; it reads ARTGSGKT. Positions 250 to 253 match the DEAD box motif; that stretch reads DEAD. 3 disordered regions span residues 343–370, 613–722, and 851–934; these read GPPE…NPKE, ELGP…FQDP, and GAQP…RQKR. Residues 359-513 form the Helicase C-terminal domain; sequence KRKREYRPNP…KNPSFAADVV (155 aa). 2 stretches are compositionally biased toward acidic residues: residues 644-654 and 662-700; these read DEDDEDVDMED and EETN…DSEM. The span at 864 to 926 shows a compositional bias: basic and acidic residues; it reads EKAPKDADKF…VAEKKREKNA (63 aa).

It belongs to the DEAD box helicase family. DDX54/DBP10 subfamily.

Its subcellular location is the nucleus. It localises to the nucleolus. It carries out the reaction ATP + H2O = ADP + phosphate + H(+). Functionally, ATP-binding RNA helicase involved in the biogenesis of 60S ribosomal subunits and is required for the normal formation of 25S and 5.8S rRNAs. The sequence is that of ATP-dependent RNA helicase dbp-10 (dbp-10) from Neurospora crassa (strain ATCC 24698 / 74-OR23-1A / CBS 708.71 / DSM 1257 / FGSC 987).